Here is a 346-residue protein sequence, read N- to C-terminus: MAMVSEFLKQACYIEKQEQEYVQAVKSYKGGPGSAVSPYPSFNPSSDVAALHKAIMVKGVDEATIIDILTKRTNAQRQQIKAAYLQETGKPLDETLKKALTGHLEEVVLAMLKTPAQFDADELRAAMKGLGTDEDTLIEILTTRSNQQIREITRVYREELKRDLAKDITSDTSGDFRNALLALAKGDRCEDMSVNQDLADTDARALYEAGERRKGTDVNVFNTILTTRSYPHLRKVFQNYRKYSQHDMNKALDLELKGDIEKCLTTIVKCATSTPAFFAEKLYEAMKGAGTRHKTLIRIMVSRSEIDMNEIKVFYQKKYGIPLCQAILDETKGDYEKILVALCGGN.

The residue at position 2 (Ala2) is an N-acetylalanine. A Phosphoserine; by TRPM7 modification is found at Ser5. Gln19 participates in a covalent cross-link: Isoglutamyl lysine isopeptide (Gln-Lys) (interchain with K-?). A Phosphotyrosine; by EGFR modification is found at Tyr21. Ser27 bears the Phosphoserine; by PKC mark. Residues Ser34 and Ser37 each carry the phosphoserine modification. 4 Annexin repeats span residues 42-113 (FNPS…AMLK), 114-185 (TPAQ…ALAK), 197-269 (DLAD…TIVK), and 273-344 (STPA…ALCG). Lys58 is subject to N6-acetyllysine. The Ca(2+) site is built by Gly59, Val60, Glu62, Lys97, Leu100, Glu105, Met127, Gly129, Gly131, Thr132, and Glu134. Residue Thr136 is modified to Phosphothreonine. Ca(2+)-binding residues include Asp171, Gly210, and Arg213. A Glycyl lysine isopeptide (Lys-Gly) (interchain with G-Cter in SUMO1); alternate cross-link involves residue Lys214. Residue Lys214 forms a Glycyl lysine isopeptide (Lys-Gly) (interchain with G-Cter in SUMO2); alternate linkage. Gly215, Asp253, Glu255, and Leu256 together coordinate Ca(2+). Lys257 is covalently cross-linked (Glycyl lysine isopeptide (Lys-Gly) (interchain with G-Cter in SUMO1)). Residues Glu261, Met286, Gly288, and Gly290 each coordinate Ca(2+). The residue at position 312 (Lys312) is an N6-acetyllysine. Cys324 and Cys343 form a disulfide bridge. The Ca(2+) site is built by Leu328, Glu330, and Thr331. Residue Lys332 forms a Glycyl lysine isopeptide (Lys-Gly) (interchain with G-Cter in SUMO1) linkage. Residue Glu336 participates in Ca(2+) binding.

It belongs to the annexin family. Homodimer; non-covalently linked. Homodimer; linked by transglutamylation. Homodimers linked by transglutamylation are observed in placenta, but not in other tissues. Interacts with S100A11. Heterotetramer, formed by two molecules each of S100A11 and ANXA1. Interacts with DYSF. Interacts with EGFR. Post-translationally, phosphorylated by protein kinase C, EGFR and TRPM7. Phosphorylated in response to EGF treatment. Sumoylated. In terms of processing, proteolytically cleaved by cathepsin CTSG to release the active N-terminal peptide Ac2-26. As to expression, detected in eosinophils. Detected in lung, placenta, spleen and thymus (at protein level).

The protein localises to the nucleus. It is found in the cytoplasm. It localises to the cell projection. Its subcellular location is the cilium. The protein resides in the basolateral cell membrane. The protein localises to the lateral cell membrane. It is found in the cell membrane. It localises to the apical cell membrane. Its subcellular location is the membrane. The protein resides in the endosome membrane. The protein localises to the secreted. It is found in the extracellular space. It localises to the early endosome. Its subcellular location is the cytoplasmic vesicle membrane. The protein resides in the extracellular exosome. The protein localises to the cytoplasmic vesicle. It is found in the secretory vesicle lumen. It localises to the phagocytic cup. Functionally, plays important roles in the innate immune response as effector of glucocorticoid-mediated responses and regulator of the inflammatory process. Has anti-inflammatory activity. Plays a role in glucocorticoid-mediated down-regulation of the early phase of the inflammatory response. Contributes to the adaptive immune response by enhancing signaling cascades that are triggered by T-cell activation, regulates differentiation and proliferation of activated T-cells. Promotes the differentiation of T-cells into Th1 cells and negatively regulates differentiation into Th2 cells. Has no effect on unstimulated T-cells. Negatively regulates hormone exocytosis via activation of the formyl peptide receptors and reorganization of the actin cytoskeleton. Has high affinity for Ca(2+) and can bind up to eight Ca(2+) ions. Displays Ca(2+)-dependent binding to phospholipid membranes. Plays a role in the formation of phagocytic cups and phagosomes. Plays a role in phagocytosis by mediating the Ca(2+)-dependent interaction between phagosomes and the actin cytoskeleton. In terms of biological role, functions at least in part by activating the formyl peptide receptors and downstream signaling cascades. Promotes chemotaxis of granulocytes and monocytes via activation of the formyl peptide receptors. Promotes rearrangement of the actin cytoskeleton, cell polarization and cell migration. Promotes resolution of inflammation and wound healing. Acts via neutrophil N-formyl peptide receptors to enhance the release of CXCL2. This chain is Annexin A1 (Anxa1), found in Rattus norvegicus (Rat).